The chain runs to 119 residues: Autophagy-related protein 8h (119 aa).

Glycine 119 carries Phosphatidylethanolamine amidated glycine lipidation.

Belongs to the ATG8 family. Interacts with ATG4. Interacts with ATI1. In terms of processing, gly-119 forms then a thioester bond with the 'Cys-558' of ATG7 (E1-like activating enzyme) before being transferred to the 'Cys-258' of ATG3 (the specific E2 conjugating enzyme), in order to be finally amidated with phosphatidylethanolamine. This lipid modification anchors ATG8 to autophagosomes. Constitutively expressed.

It localises to the cytoplasmic vesicle. It is found in the autophagosome membrane. The protein localises to the vacuole membrane. The protein resides in the cytoplasm. Its subcellular location is the cytoskeleton. Its function is as follows. Ubiquitin-like modifier involved in autophagosomes formation. May mediate the delivery of the autophagosomes to the vacuole via the microtubule cytoskeleton. In Arabidopsis thaliana (Mouse-ear cress), this protein is Autophagy-related protein 8h (ATG8H).